Consider the following 96-residue polypeptide: Large ribosomal subunit protein bL28 (96 aa).

The disordered stretch occupies residues M1 to N23.

This sequence belongs to the bacterial ribosomal protein bL28 family.

The sequence is that of Large ribosomal subunit protein bL28 from Cereibacter sphaeroides (strain ATCC 17029 / ATH 2.4.9) (Rhodobacter sphaeroides).